The following is a 475-amino-acid chain: Zinc finger protein 383 (475 aa).

Positions 6–77 (VMFSDVSIDF…GRELTRGLCS (72 aa)) constitute a KRAB domain. 11 consecutive C2H2-type zinc fingers follow at residues 170-192 (FECK…QRIH), 198-220 (YECK…LKIH), 226-248 (FECK…QRIH), 254-276 (YECK…QRIH), 282-304 (YACK…VRIH), 310-332 (YECK…QRIH), 338-360 (YECK…QRIH), 366-388 (YDCK…QRIH), 394-416 (FECL…QRIH), 422-444 (YECN…LRIH), and 450-472 (YNCK…QGIH).

It belongs to the krueppel C2H2-type zinc-finger protein family.

Its subcellular location is the nucleus. It is found in the cytoplasm. Its function is as follows. May function as a transcriptional repressor, suppressing transcriptional activities mediated by MAPK signaling pathways. The chain is Zinc finger protein 383 (ZNF383) from Macaca fascicularis (Crab-eating macaque).